Consider the following 466-residue polypeptide: Soluble pyridine nucleotide transhydrogenase (466 aa).

E36–C45 is a binding site for FAD.

This sequence belongs to the class-I pyridine nucleotide-disulfide oxidoreductase family. Homooligomer; probable homooctamer. It depends on FAD as a cofactor.

The protein localises to the cytoplasm. It carries out the reaction NAD(+) + NADPH = NADH + NADP(+). Conversion of NADPH, generated by peripheral catabolic pathways, to NADH, which can enter the respiratory chain for energy generation. This Shigella flexneri protein is Soluble pyridine nucleotide transhydrogenase.